The sequence spans 118 residues: Ribosome-binding factor A (118 aa).

Belongs to the RbfA family. Monomer. Binds 30S ribosomal subunits, but not 50S ribosomal subunits or 70S ribosomes.

It localises to the cytoplasm. Functionally, one of several proteins that assist in the late maturation steps of the functional core of the 30S ribosomal subunit. Associates with free 30S ribosomal subunits (but not with 30S subunits that are part of 70S ribosomes or polysomes). Required for efficient processing of 16S rRNA. May interact with the 5'-terminal helix region of 16S rRNA. This chain is Ribosome-binding factor A, found in Streptococcus pyogenes serotype M1.